The sequence spans 156 residues: Snaclec A4 (156 aa).

Residues 1–23 (MGRSISVSFGLLVVFLSLSGTGA) form the signal peptide. Cysteine 27 and cysteine 38 are oxidised to a cystine. The C-type lectin domain occupies 34–155 (HEGHCYKVFN…CGQPYRFTCE (122 aa)). Residue asparagine 45 is glycosylated (N-linked (GlcNAc...) asparagine). 2 cysteine pairs are disulfide-bonded: cysteine 55/cysteine 154 and cysteine 129/cysteine 146.

Belongs to the snaclec family. Heterodimer; disulfide-linked. As to expression, expressed by the venom gland.

The protein localises to the secreted. Interferes with one step of hemostasis (modulation of platelet aggregation, or coagulation cascade, for example). This chain is Snaclec A4, found in Macrovipera lebetinus (Levantine viper).